Here is a 343-residue protein sequence, read N- to C-terminus: Membrane progestin receptor delta (343 aa).

Over 1–49 (MLSLKMPQLLRVHQVPRVFWEEGIMSGYRCPTSSALDCVLSSFQMTNET) the chain is Cytoplasmic. The helical transmembrane segment at 50-70 (VNIWTHFLPTWYFLWRLLALG) threads the bilayer. The Extracellular portion of the chain corresponds to 71-79 (SPGFRADPY). The chain crosses the membrane as a helical span at residues 80–100 (HLPLLVFLLPACLYPFASCCA). At 101–112 (HTFSSMSPRARH) the chain is on the cytoplasmic side. A helical transmembrane segment spans residues 113-133 (ICYFLDYGALSLYSLGCAFPY). Topologically, residues 134 to 146 (AAYSMPASWLHSR) are extracellular. Residues 147–167 (LHQLFVPAAALNSFLCTGLSC) form a helical membrane-spanning segment. At 168–216 (YSRFPELEYPGFSKALRTAAFAYPFLFDNLPLFYRLRLCWGGAHSCGRD) the chain is on the cytoplasmic side. A helical membrane pass occupies residues 217 to 237 (ALSSNHGYHLLCALLSGFLFA). Residues 238–257 (ARLPERLAPGRFDYIGHSHQ) lie on the Extracellular side of the membrane. A helical membrane pass occupies residues 258–278 (LFHICAVLGTHFQLEAVLADM). Residues 279–291 (GSRRAWLAVQEPT) lie on the Cytoplasmic side of the membrane. Residues 292-312 (LGLGATVATLSLAVIGNLFII) form a helical membrane-spanning segment. The Extracellular portion of the chain corresponds to 313–343 (AAFTASLLRMPGPCPLLQGSPLEEGLQAKQQ).

Belongs to the ADIPOR family. Homodimer.

The protein localises to the cell membrane. Plasma membrane progesterone (P4) receptor coupled to G proteins. Seems to act through a G(s) mediated pathway. Involved in neurosteroid inhibition of apoptosis. May be involved in regulating rapid P4 signaling in the nervous system. Also binds dehydroepiandrosterone (DHEA), pregnanolone, pregnenolone and allopregnanolone. The chain is Membrane progestin receptor delta from Mus musculus (Mouse).